The chain runs to 173 residues: Photosystem I reaction center subunit XI (173 aa).

Transmembrane regions (helical) follow at residues 92-112 (LAGLLAAIGLVVLLTGALSLY) and 148-168 (LIGGIGGAVVAYFLTSNLGII).

Belongs to the PsaL family.

It localises to the cellular thylakoid membrane. This chain is Photosystem I reaction center subunit XI, found in Nostoc punctiforme (strain ATCC 29133 / PCC 73102).